Consider the following 235-residue polypeptide: Glycerol-3-phosphate acyltransferase (235 aa).

A run of 6 helical transmembrane segments spans residues 4–24, 56–76, 94–114, 122–142, 152–172, and 191–211; these read LIAILAISYLVGAIPTGIMAG, AVTLLDILKGIVAAVSIVAFF, LLAGMSAVIGHVFTVFAGFKG, AGMLIGIAPVSMLIVIGIFLL, VASILAAIAFPLIIAIRKYIF, and FHDSLDYHLMIFGLIVALAIL.

This sequence belongs to the PlsY family. As to quaternary structure, probably interacts with PlsX.

Its subcellular location is the cell inner membrane. The enzyme catalyses an acyl phosphate + sn-glycerol 3-phosphate = a 1-acyl-sn-glycero-3-phosphate + phosphate. The protein operates within lipid metabolism; phospholipid metabolism. Catalyzes the transfer of an acyl group from acyl-phosphate (acyl-PO(4)) to glycerol-3-phosphate (G3P) to form lysophosphatidic acid (LPA). This enzyme utilizes acyl-phosphate as fatty acyl donor, but not acyl-CoA or acyl-ACP. The polypeptide is Glycerol-3-phosphate acyltransferase (Chlorobium phaeobacteroides (strain DSM 266 / SMG 266 / 2430)).